A 214-amino-acid polypeptide reads, in one-letter code: Large ribosomal subunit protein uL3 (214 aa).

Positions 131–155 are disordered; the sequence is GAQRTSHGNSRSHRVPGSIGMAQDP. Glutamine 153 bears the N5-methylglutamine mark.

Belongs to the universal ribosomal protein uL3 family. In terms of assembly, part of the 50S ribosomal subunit. Forms a cluster with proteins L14 and L19. Post-translationally, methylated by PrmB.

Its function is as follows. One of the primary rRNA binding proteins, it binds directly near the 3'-end of the 23S rRNA, where it nucleates assembly of the 50S subunit. This chain is Large ribosomal subunit protein uL3, found in Neisseria gonorrhoeae (strain ATCC 700825 / FA 1090).